The following is a 1013-amino-acid chain: GTPase-activating protein BEM3 (1013 aa).

4 disordered regions span residues 90–197, 258–277, 282–301, and 307–421; these read TVVE…GSPA, GSRYDTERAGGPGPLSPESI, SDLQEHQPSDLSSTTRTDLG, and VDTT…HQSK. Polar residues predominate over residues 143–160; that stretch reads QEATSGAQQVPLLTSSKS. Polar residues-rich tracts occupy residues 309-319, 333-388, and 404-418; these read TTFNAEDNPTG, TLQN…TSSN, and KSYSQHSGSPHSNSH. One can recognise a PH domain in the interval 555–662; the sequence is EFAKEGMLLV…WISVLTTLCD (108 aa). Residues 702-726 are disordered; it reads AMDATSPTRPNDPNPVSLTSEEEKE. Positions 706–720 are enriched in polar residues; it reads TSPTRPNDPNPVSLT. Residues 799–1013 form the Rho-GAP domain; it reads LQLSSHPYQG…PPVNIHIPQI (215 aa).

It is found in the cytoplasm. GTPase-activating protein (GAP) for CDC42 and less efficiently for RHO1. Negative regulator of the pheromone-response pathway through the STE20 protein kinase. This Eremothecium gossypii (strain ATCC 10895 / CBS 109.51 / FGSC 9923 / NRRL Y-1056) (Yeast) protein is GTPase-activating protein BEM3 (BEM3).